The primary structure comprises 126 residues: Cyclin-dependent kinase 2-associated protein 2 (126 aa).

The interval 1-48 (MSYKPIAPAPSSTPGSSTPGPGTPVPTGSVPSPSGSVPGAGAPFRPLF) is disordered. The segment covering 9 to 43 (APSSTPGSSTPGPGTPVPTGSVPSPSGSVPGAGAP) has biased composition (low complexity). Residues 64–106 (PPGAQGSQSTYTDLLSVIEEMGKEIRPTYAGSKSAMERLKRGI) form an interaction with CDK2 region.

Belongs to the CDK2AP family. As to quaternary structure, component of the nucleosome remodeling and deacetylase (NuRD) repressor complex, composed of core proteins MTA1, MTA2, MTA3, RBBP4, RBBP7, HDAC1, HDAC2, MBD2, MBD3, and peripherally associated proteins CDK2AP1, CDK2AP2, GATAD2A, GATAD2B, CHD3, CHD4 and CHD5. The exact stoichiometry of the NuRD complex is unknown, and some subunits such as MBD2 and MBD3, GATAD2A and GATAD2B, and CHD3, CHD4 and CHD5 define mutually exclusive NuRD complexes. Interacts with CDK2AP1. Interacts with CDK2. Interacts with MAPK1. In terms of processing, phosphorylated by MAPK1 and CDK2. As to expression, ubiquitous.

It is found in the cytoplasm. The protein localises to the nucleus. Functionally, acts as a component of the histone deacetylase NuRD complex which participates in the remodeling of chromatin. Inhibits cell cycle G1/S phase transition by repressing CDK2 expression and activation; represses CDK2 activation by inhibiting its interaction with cyclin E and A. Plays a role in regulating the self-renewal of embryonic stem cells (ESCs) and in maintaining cell survival during terminal differentiation of ESCs. Regulates microtubule organization of metaphase II oocytes. This chain is Cyclin-dependent kinase 2-associated protein 2 (CDK2AP2), found in Homo sapiens (Human).